The following is a 274-amino-acid chain: 2,3,4,5-tetrahydropyridine-2,6-dicarboxylate N-succinyltransferase (274 aa).

Substrate contacts are provided by Arg104 and Asp141.

It belongs to the transferase hexapeptide repeat family. As to quaternary structure, homotrimer.

The protein resides in the cytoplasm. The catalysed reaction is (S)-2,3,4,5-tetrahydrodipicolinate + succinyl-CoA + H2O = (S)-2-succinylamino-6-oxoheptanedioate + CoA. The protein operates within amino-acid biosynthesis; L-lysine biosynthesis via DAP pathway; LL-2,6-diaminopimelate from (S)-tetrahydrodipicolinate (succinylase route): step 1/3. In Escherichia coli O139:H28 (strain E24377A / ETEC), this protein is 2,3,4,5-tetrahydropyridine-2,6-dicarboxylate N-succinyltransferase.